A 27-amino-acid polypeptide reads, in one-letter code: uncharacterized protein (27 aa).

The protein resides in the plastid. Its subcellular location is the chloroplast. This is an uncharacterized protein from Anthoceros angustus (Hornwort).